Here is a 210-residue protein sequence, read N- to C-terminus: Thymidylate kinase (210 aa).

ATP is bound at residue 9-16; the sequence is GPEGAGKT.

The protein belongs to the thymidylate kinase family.

The enzyme catalyses dTMP + ATP = dTDP + ADP. Phosphorylation of dTMP to form dTDP in both de novo and salvage pathways of dTTP synthesis. This is Thymidylate kinase from Thermomicrobium roseum (strain ATCC 27502 / DSM 5159 / P-2).